The sequence spans 140 residues: Large-conductance mechanosensitive channel 3 (140 aa).

Helical transmembrane passes span 8 to 28 (FISK…AAFG), 30 to 50 (IVTS…FGGL), and 81 to 101 (GSFI…FLMV).

The protein belongs to the MscL family. As to quaternary structure, homopentamer.

The protein resides in the cell inner membrane. Channel that opens in response to stretch forces in the membrane lipid bilayer. May participate in the regulation of osmotic pressure changes within the cell. In Mesorhizobium japonicum (strain LMG 29417 / CECT 9101 / MAFF 303099) (Mesorhizobium loti (strain MAFF 303099)), this protein is Large-conductance mechanosensitive channel 3.